Consider the following 108-residue polypeptide: Small ribosomal subunit protein uS17 (108 aa).

The protein belongs to the universal ribosomal protein uS17 family. In terms of assembly, part of the 30S ribosomal subunit.

Its function is as follows. One of the primary rRNA binding proteins, it binds specifically to the 5'-end of 16S ribosomal RNA. This Methanoculleus marisnigri (strain ATCC 35101 / DSM 1498 / JR1) protein is Small ribosomal subunit protein uS17.